A 474-amino-acid polypeptide reads, in one-letter code: MSRLVVVSNRIAPPDEHAASAGGLAVGILGALKAAGGLWFGWSGETGNEDQPLKKVKKGNITWASFNLSEQDLDEYYNQFSNAVLWPAFHYRLDLVQFQRPAWDGYLRVNALLADKLLPLLQDDDIIWIHDYHLLPFAHELRKRGVNNRIGFFLHIPFPTPEIFNALPTYDTLLEQLCDYDLLGFQTENDRLAFLDCLSNLTRVTTRSAKSHTAWGKAFRTEVYPIGIEPKEIAKQAAGPLPPKLAQLKAELKNVQNIFSVERLDYSKGLPERFLAYEALLEKYPQHHGKIRYTQIAPTSRGDVQAYQDIRHQLENEAGRINGKYGQLGWTPLYYLNQHFDRKLLMKIFRYSDVGLVTPLRDGMNLVAKEYVAAQDPANPGVLVLSQFAGAANELTSALIVNPYDRDEVAAALDRALTMSLAERISRHAEMLDVIVKNDINHWQECFISDLKQIVPRSAESQQRDKVATFPKLA.

A D-glucose 6-phosphate-binding site is contributed by R10. 22–23 serves as a coordination point for UDP-alpha-D-glucose; the sequence is GG. Residues Y77 and D131 each contribute to the D-glucose 6-phosphate site. The UDP-alpha-D-glucose site is built by R263 and K268. R301 lines the D-glucose 6-phosphate pocket. UDP-alpha-D-glucose is bound by residues F340 and 366 to 370; that span reads LVAKE.

Belongs to the glycosyltransferase 20 family. In terms of assembly, homotetramer.

The enzyme catalyses D-glucose 6-phosphate + UDP-alpha-D-glucose = alpha,alpha-trehalose 6-phosphate + UDP + H(+). Its pathway is glycan biosynthesis; trehalose biosynthesis. Functionally, probably involved in the osmoprotection via the biosynthesis of trehalose. Catalyzes the transfer of glucose from UDP-alpha-D-glucose (UDP-Glc) to D-glucose 6-phosphate (Glc-6-P) to form trehalose-6-phosphate. Acts with retention of the anomeric configuration of the UDP-sugar donor. The sequence is that of Trehalose-6-phosphate synthase from Shigella dysenteriae serotype 1 (strain Sd197).